Consider the following 556-residue polypeptide: MTPAAVVMSNYGEEEIVRPIADFSPSLWGDRFHSFSLDNQIAGKYAQEIETLKEQSRIILSASSRRTLAEKLDLIDIVERLGIAYHFEKQIDDMLDQFYKADPNFEAHEYNDLQTLSVQFRLLRQHGYNISPKLFIRFQDAKGKFKESLCNDIKGLLNLYEASHVRTHGEDILEEALAFSTAHLESAAPHLKSPLSKQVTHALEQSLHKSIPRVETRYFISIYEEEEQKNDVLLQFAKLDFNLLQMLHKQELSEVSRWWKDLDFVTTLPYARDRAVECYFWTMGVYAEPQYSQARVMLAKTIAMISIVDDTFDAYGIVKELEIYTDAIQRWDISQIDRLPDYMKISYKALLDLYNDYEMELSKDGRSDVVHYAKERMKEIVRNYFVEAKWFIEGYMPPVSEYLSNALATSTYYLLTTTSYLGMKSANKQDFEWLAKNPKILEANVTLCRVIDDIATYEVEKGRGQIATGIECYMRDYGVSTEKAMEKFQEMAETAWKDVNEGILRPTPVSTEILTRILNLARIIDVTYKHNQDGYTHPEKVLKPHIIALLVDSIEI.

Aspartate 309, aspartate 313, aspartate 452, threonine 456, and glutamate 460 together coordinate Mg(2+). A DDXXD motif motif is present at residues 309 to 313 (DDTFD).

The protein belongs to the terpene synthase family. Tpsa subfamily. The cofactor is Mg(2+).

It is found in the cytoplasm. It catalyses the reaction (2E,6E)-farnesyl diphosphate = (-)-vetispiradiene + diphosphate. Its pathway is secondary metabolite biosynthesis; terpenoid biosynthesis. In terms of biological role, sesquiterpene synthase that catalyzes the formation of vetispiradiene from trans,trans-farnesyl diphosphate. The initial internal cyclization produces the monocyclic intermediate germacrene A. The polypeptide is Vetispiradiene synthase 1 (PVS1) (Solanum tuberosum (Potato)).